We begin with the raw amino-acid sequence, 169 residues long: RNA annealing protein YRA2 (169 aa).

The 75-residue stretch at 45–119 (KRLRFTNVPL…GTVTVEIFEQ (75 aa)) folds into the RRM domain. Residues 119-169 (QERRPDRRRRTQRDNRRGNGRGSRGSHYKRQDRPAMEDELNAELEDYMKSS) are disordered.

Belongs to the YRA1 family. Associates with mRNPs.

It localises to the nucleus. In terms of biological role, involved in export of poly(A) mRNAs from the nucleus. Recruited to the coding sequences as well as poly-A sites of active genes. The chain is RNA annealing protein YRA2 (YRA2) from Zygosaccharomyces rouxii (strain ATCC 2623 / CBS 732 / NBRC 1130 / NCYC 568 / NRRL Y-229).